The sequence spans 70 residues: SPbeta prophage-derived uncharacterized protein YotJ (70 aa).

This Bacillus subtilis (strain 168) protein is SPbeta prophage-derived uncharacterized protein YotJ (yotJ).